Here is a 469-residue protein sequence, read N- to C-terminus: Neuraminidase (469 aa).

Residues 1–9 are Intravirion-facing; that stretch reads MNPNQKIIT. A helical transmembrane segment spans residues 10–30; sequence IGSVSLTIATICFLMQIAILV. The tract at residues 11–33 is involved in apical transport and lipid raft association; that stretch reads GSVSLTIATICFLMQIAILVTTV. The Virion surface portion of the chain corresponds to 31-469; sequence TTVTLHFKQY…DGADINLMPI (439 aa). The interval 36–88 is hypervariable stalk region; the sequence is HFKQYECDSPANNQVMPCEPISIERNITEIVYLTNTTIEKEICPKLVEYRNWS. N-linked (GlcNAc...) asparagine; by host glycosylation is found at N61, N70, and N86. Residues 91-469 are head of neuraminidase; that stretch reads QCKITGFAPF…DGADINLMPI (379 aa). 8 cysteine pairs are disulfide-bonded: C92-C417, C124-C129, C183-C230, C232-C237, C278-C291, C280-C289, C318-C337, and C421-C447. R118 serves as a coordination point for substrate. N146 carries an N-linked (GlcNAc...) asparagine; by host glycan. D151 (proton donor/acceptor) is an active-site residue. R152 lines the substrate pocket. 2 N-linked (GlcNAc...) asparagine; by host glycosylation sites follow: N200 and N234. 276–277 is a substrate binding site; that stretch reads EE. R292 is a binding site for substrate. Positions 293, 297, and 324 each coordinate Ca(2+). R371 is a binding site for substrate. N402 is a glycosylation site (N-linked (GlcNAc...) asparagine; by host). Residue Y406 is the Nucleophile of the active site.

This sequence belongs to the glycosyl hydrolase 34 family. As to quaternary structure, homotetramer. It depends on Ca(2+) as a cofactor. In terms of processing, N-glycosylated.

It is found in the virion membrane. The protein resides in the host apical cell membrane. The enzyme catalyses Hydrolysis of alpha-(2-&gt;3)-, alpha-(2-&gt;6)-, alpha-(2-&gt;8)- glycosidic linkages of terminal sialic acid residues in oligosaccharides, glycoproteins, glycolipids, colominic acid and synthetic substrates.. With respect to regulation, inhibited by the neuraminidase inhibitors zanamivir (Relenza) and oseltamivir (Tamiflu). These drugs interfere with the release of progeny virus from infected cells and are effective against all influenza strains. Resistance to neuraminidase inhibitors is quite rare. Its function is as follows. Catalyzes the removal of terminal sialic acid residues from viral and cellular glycoconjugates. Cleaves off the terminal sialic acids on the glycosylated HA during virus budding to facilitate virus release. Additionally helps virus spread through the circulation by further removing sialic acids from the cell surface. These cleavages prevent self-aggregation and ensure the efficient spread of the progeny virus from cell to cell. Otherwise, infection would be limited to one round of replication. Described as a receptor-destroying enzyme because it cleaves a terminal sialic acid from the cellular receptors. May facilitate viral invasion of the upper airways by cleaving the sialic acid moieties on the mucin of the airway epithelial cells. Likely to plays a role in the budding process through its association with lipid rafts during intracellular transport. May additionally display a raft-association independent effect on budding. Plays a role in the determination of host range restriction on replication and virulence. Sialidase activity in late endosome/lysosome traffic seems to enhance virus replication. The chain is Neuraminidase from Aves (whales).